Reading from the N-terminus, the 130-residue chain is Flagellar assembly factor FliW (130 aa).

Belongs to the FliW family. In terms of assembly, interacts with translational regulator CsrA and flagellin(s).

It localises to the cytoplasm. In terms of biological role, acts as an anti-CsrA protein, binds CsrA and prevents it from repressing translation of its target genes, one of which is flagellin. Binds to flagellin and participates in the assembly of the flagellum. The sequence is that of Flagellar assembly factor FliW from Borrelia turicatae (strain 91E135).